The sequence spans 219 residues: MDRFLYYPLSLMPYLVITLIVSFTMHELAHAYVAYKFGDDTAKKQGRLTLNPIKHLDPFGTILILVAGFGWARPIPVNRRFFKKPRLAGVLVSIAGPVSNLILAFIGFFLLVLMHAYGMEMLAAFSTGLDQFFSIWIQLNLVLFLFNLLPLPPLDGYRIIEDLVPPGVRAKMTQAESYGFIVFLVLFVTPLGSYVLWPMLNAGRDSILKLFSAIFQPLL.

The helical transmembrane segment at 4 to 24 (FLYYPLSLMPYLVITLIVSFT) threads the bilayer. H26 lines the Zn(2+) pocket. E27 is a catalytic residue. H30 serves as a coordination point for Zn(2+). 4 helical membrane-spanning segments follow: residues 52-72 (PIKH…FGWA), 94-114 (IAGP…LVLM), 132-152 (FFSI…LPLP), and 180-200 (FIVF…WPML).

The protein belongs to the peptidase M50B family. It depends on Zn(2+) as a cofactor.

It localises to the cell membrane. The sequence is that of Putative zinc metalloprotease YwhC (ywhC) from Bacillus subtilis (strain 168).